The following is a 421-amino-acid chain: UPF0415 protein C7orf25 homolog (421 aa).

This sequence belongs to the UPF0415 family.

The chain is UPF0415 protein C7orf25 homolog from Bos taurus (Bovine).